The sequence spans 92 residues: Small ribosomal subunit protein uS19c (92 aa).

It belongs to the universal ribosomal protein uS19 family.

The protein resides in the plastid. It localises to the chloroplast. Functionally, protein S19 forms a complex with S13 that binds strongly to the 16S ribosomal RNA. The protein is Small ribosomal subunit protein uS19c of Chara vulgaris (Common stonewort).